Consider the following 164-residue polypeptide: Xanthine-guanine phosphoribosyltransferase (164 aa).

5-phospho-alpha-D-ribose 1-diphosphate is bound by residues 41-42 (RG) and 98-106 (DDLTDTGKT). Aspartate 99 contacts Mg(2+). Guanine contacts are provided by aspartate 102 and isoleucine 145. Aspartate 102 and isoleucine 145 together coordinate xanthine. GMP contacts are provided by residues 102–106 (DTGKT) and 144–145 (WI).

This sequence belongs to the purine/pyrimidine phosphoribosyltransferase family. XGPT subfamily. As to quaternary structure, homotetramer. Mg(2+) serves as cofactor.

It is found in the cell inner membrane. The catalysed reaction is GMP + diphosphate = guanine + 5-phospho-alpha-D-ribose 1-diphosphate. It carries out the reaction XMP + diphosphate = xanthine + 5-phospho-alpha-D-ribose 1-diphosphate. It catalyses the reaction IMP + diphosphate = hypoxanthine + 5-phospho-alpha-D-ribose 1-diphosphate. The protein operates within purine metabolism; GMP biosynthesis via salvage pathway; GMP from guanine: step 1/1. It participates in purine metabolism; XMP biosynthesis via salvage pathway; XMP from xanthine: step 1/1. Purine salvage pathway enzyme that catalyzes the transfer of the ribosyl-5-phosphate group from 5-phospho-alpha-D-ribose 1-diphosphate (PRPP) to the N9 position of the 6-oxopurines guanine and xanthine to form the corresponding ribonucleotides GMP (guanosine 5'-monophosphate) and XMP (xanthosine 5'-monophosphate), with the release of PPi. To a lesser extent, also acts on hypoxanthine. The sequence is that of Xanthine-guanine phosphoribosyltransferase from Rhizobium johnstonii (strain DSM 114642 / LMG 32736 / 3841) (Rhizobium leguminosarum bv. viciae).